Consider the following 616-residue polypeptide: DEAD-box ATP-dependent RNA helicase 53, mitochondrial (616 aa).

Residues 1 to 81 constitute a mitochondrion transit peptide; the sequence is MITTVLRRSL…DFRASMVSQA (81 aa). The short motif at 104-132 is the Q motif element; the sequence is LAISELGISPEIVKALSSKGIEKLFPIQK. The Helicase ATP-binding domain occupies 135-309; it reads LEPAMEGRDM…KKYLNNPLTV (175 aa). 148 to 155 serves as a coordination point for ATP; it reads ARTGTGKT. The DEAD box signature appears at 257-260; sequence DEAD. Residues 338–482 form the Helicase C-terminal domain; sequence IIGPLVTEHA…ELPSIAVERG (145 aa). The disordered stretch occupies residues 489–616; sequence GIGSRSGGSF…FGSNDGKRSY (128 aa). Gly residues-rich tracts occupy residues 492–501 and 508–531; these read SRSGGSFGGG and SFGGRSGGGGYGGSSGGYGGGRSG. Low complexity-rich tracts occupy residues 532-568 and 578-587; these read GSSNRYSGDSDRSGFGSFGMRSPEGYGSDRSSQSGGR and GSSNNRSSGF.

Belongs to the DEAD box helicase family. DDX21/DDX50 subfamily.

It is found in the mitochondrion. It carries out the reaction ATP + H2O = ADP + phosphate + H(+). This Arabidopsis thaliana (Mouse-ear cress) protein is DEAD-box ATP-dependent RNA helicase 53, mitochondrial (RH53).